Reading from the N-terminus, the 584-residue chain is Ubiquitin-like-specific protease 1D (584 aa).

2 disordered regions span residues aspartate 28–leucine 64 and aspartate 99–glutamate 323. Residues aspartate 99 to serine 120 are compositionally biased toward basic and acidic residues. Residues lysine 121 to valine 132 show a composition bias toward low complexity. Basic and acidic residues-rich tracts occupy residues aspartate 142–serine 165 and proline 176–glutamate 196. A compositionally biased stretch (basic residues) spans arginine 197 to valine 207. The segment covering glycine 221–methionine 253 has biased composition (basic and acidic residues). The span at isoleucine 261–aspartate 274 shows a compositional bias: acidic residues. The segment covering threonine 275–tryptophan 286 has biased composition (basic and acidic residues). Catalysis depends on residues histidine 438, aspartate 461, and cysteine 525.

The protein belongs to the peptidase C48 family.

Its subcellular location is the nucleus speckle. Protease that catalyzes two essential functions in the SUMO pathway: processing of full-length SUMOs to their mature forms and deconjugation of SUMO from targeted proteins. Cleaves precursors of SUM1 and SUM2, but not of SUM3 or SUM5. Able to release SUM1 and SUM2 from conjugates, but unable to cleave SUM3. Protease activity mainly directed at deconjugating SUM1 and SUM2 from their target proteins. Regulates salt stress responses and flowering time. Redundant with ULP1C. This is Ubiquitin-like-specific protease 1D (ULP1D) from Arabidopsis thaliana (Mouse-ear cress).